A 110-amino-acid chain; its full sequence is Protein YcgL (110 aa).

In terms of domain architecture, YcgL spans 14–98; the sequence is MFCVIYRSSK…PPEDLLKQHL (85 aa).

The chain is Protein YcgL from Salmonella arizonae (strain ATCC BAA-731 / CDC346-86 / RSK2980).